A 370-amino-acid chain; its full sequence is Protein-tyrosine sulfotransferase 1 (370 aa).

Topologically, residues Met1–Asn8 are cytoplasmic. A helical; Signal-anchor for type II membrane protein membrane pass occupies residues Leu9–Gly25. Residues Gln26–Glu370 lie on the Lumenal side of the membrane. Residue Asn60 is glycosylated (N-linked (GlcNAc...) asparagine). Position 79–83 (Arg79–Thr83) interacts with 3'-phosphoadenylyl sulfate. A disulfide bridge links Cys97 with Cys157. Glu100 serves as the catalytic Proton donor/acceptor. Positions Arg102–Arg106 are interaction with peptide substrate. 3'-phosphoadenylyl sulfate-binding residues include Arg184, Ser192, and Arg196. A disulfide bridge connects residues Cys226 and Cys234. A 3'-phosphoadenylyl sulfate-binding site is contributed by Tyr239. The N-linked (GlcNAc...) asparagine glycan is linked to Asn262. 3'-phosphoadenylyl sulfate-binding positions include Ser286–Asn295 and Lys301.

Belongs to the protein sulfotransferase family. In terms of assembly, homodimer. Can also form heterodimers with TPST2. Post-translationally, N-glycosylated. As to expression, ubiquitous. Detected in heart, brain, placenta, lung, liver, skeletal muscle, kidney and pancreas.

The protein resides in the golgi apparatus membrane. It catalyses the reaction L-tyrosyl-[protein] + 3'-phosphoadenylyl sulfate = O-sulfo-L-tyrosine-[protein] + adenosine 3',5'-bisphosphate + H(+). Functionally, catalyzes the O-sulfation of tyrosine residues within acidic motifs of polypeptides, using 3'-phosphoadenylyl sulfate (PAPS) as cosubstrate. This chain is Protein-tyrosine sulfotransferase 1 (TPST1), found in Homo sapiens (Human).